A 762-amino-acid chain; its full sequence is MKFTNGYWLNREEYDVNSPKETYDAQQNGKTITAFAPYTRIMSRGDQLNLGTTTITLTSPVENVIGVKLEHFDTNEHGPEFKINNLDPEVAIEVNDQVASLQSGDLKVTLPLRTDFEMKFTANGQLVTQSETKPQATIWNHDTKVNYMREQLSMGIDEKIYGLGERFTNFVKNGQVVDTWNQDGGTGSEQAYKNIPFYISSNGYGVFVDESQRVSFEIGSENVDRVQFSTEGQSLQYYVIYGPTPKEVLHRYTQLTGAIKLPPAWSFGLWLTTSFTTDYSEETVLKFIDGMQEHHIPLDVFHFDCFWQKGFEWCTLEWDKEQFPDPEGLLKKIHDRGIKVCVWLNPYIAQKSPLFKEAKDKGYLLTRENGDIWQWDLWQAGNGFVDFTNPAAVKWYQDKLKVLLDMGVDSFKTDFGERIPAEDVKFFDGSNPQQEHNYYTLQYNRAVYEVIQQEKGADEAVLFARSQRLVHNPIQYTGAATISRSTAQCVIQLRGGLSFLLSGFGFWSHDIGGFEDGPGTPTADLYKRWSQFGLLSSHSRYHGSDVYRVPWNFDDEAVENTRKYVNKLSLMPYIYTEAAHAAAAYGNPLMRPMFLEFGDDDNVYDNATQYMFGSKILVAPIFNDQGKAHFYLPSGKWTSILDGKVYQAPRTGEWVNEVFDELDLPVLVRQNSIIVRNEKAVDAAYDYTKDVDIHLYQIQDGNVSSKVVDEHGQDTAEIKVERANGRIVINTVGLTGDSTVYVHENNDTIKLSLVDGKAEVTL.

Asp414 acts as the Nucleophile in catalysis. The active site involves Glu417.

Belongs to the glycosyl hydrolase 31 family.

The protein resides in the cell membrane. The enzyme catalyses Hydrolysis of terminal, non-reducing alpha-D-xylose residues with release of alpha-D-xylose.. Involved in the metabolism of isoprimeverose. Hydrolyzes isoprimeverose into equimolar amounts of glucose and xylose. In vitro, can also use p-nitrophenyl-alpha-D-xylopyranoside (alpha-p-NPX). This chain is Alpha-xylosidase XylQ, found in Lactiplantibacillus pentosus (Lactobacillus pentosus).